The chain runs to 348 residues: Selenide, water dikinase (348 aa).

Cys-17 is a catalytic residue. Residues Lys-20 and 48-50 each bind ATP; that span reads TRD. Residue Asp-51 participates in Mg(2+) binding. ATP-binding positions include Asp-68, Asp-91, and 139–141; that span reads GHS. Asp-91 lines the Mg(2+) pocket. Position 227 (Asp-227) interacts with Mg(2+).

Belongs to the selenophosphate synthase 1 family. Class I subfamily. In terms of assembly, homodimer. The cofactor is Mg(2+).

The enzyme catalyses hydrogenselenide + ATP + H2O = selenophosphate + AMP + phosphate + 2 H(+). In terms of biological role, synthesizes selenophosphate from selenide and ATP. The sequence is that of Selenide, water dikinase from Yersinia pseudotuberculosis serotype I (strain IP32953).